The sequence spans 154 residues: Terephthalate 1,2-dioxygenase, terminal oxygenase component subunit beta 2 (154 aa).

It belongs to the bacterial ring-hydroxylating dioxygenase beta subunit family. As to quaternary structure, heterotetramer composed of 2 alpha (TphA2I and TphA2II) and 2 beta (TphA3I and TphA3II) subunits. Part of a multicomponent enzyme system composed of a reductase (TphA1I or TphA1II) and a two-subunit oxygenase component (TphA2I or TphA2II and TphA3I or TphA3II). Requires Fe cation as cofactor.

The catalysed reaction is terephthalate + NADH + O2 + H(+) = (3S,4R)-3,4-dihydroxycyclohexa-1,5-diene-1,4-dicarboxylate + NAD(+). Inhibited by EDTA. Its function is as follows. Component of the terephthalate 1,2-dioxygenase multicomponent enzyme system which catalyzes the dioxygenation of terephthalate (TER/TPA) to 1,2-dihydroxy-3,5-cyclohexadiene-1,4-dicarboxylic acid (DCD). It can also use 2,5-dicarboxypyridine (PDC) and 1,4-napthalenedicarboxylic acid (NDC) as substrates, and preferentially uses NADPH which is the physiological electron donor. The protein is Terephthalate 1,2-dioxygenase, terminal oxygenase component subunit beta 2 (tphA3II) of Comamonas sp.